The following is a 156-amino-acid chain: Cell division protein SepF (156 aa).

A compositionally biased stretch (basic and acidic residues) spans Ala-20–Asp-36. Positions Ala-20–Pro-50 are disordered.

Belongs to the SepF family. Homodimer. Interacts with FtsZ.

It localises to the cytoplasm. Functionally, cell division protein that is part of the divisome complex and is recruited early to the Z-ring. Probably stimulates Z-ring formation, perhaps through the cross-linking of FtsZ protofilaments. Its function overlaps with FtsA. This is Cell division protein SepF from Bacillus cereus (strain G9842).